A 382-amino-acid chain; its full sequence is Sphingosine 1-phosphate receptor 1 (382 aa).

Val-2 bears the N-acetylvaline mark. Residues 2-46 (VSTSIPEVKALRSSVSDYGNYDIIVRHYNYTGKLNIGAEKDHGIK) lie on the Extracellular side of the membrane. Residue Lys-10 is modified to N6-acetyllysine. Asn-30 carries an N-linked (GlcNAc...) asparagine glycan. Residues 47–68 (LTSVVFILICCFIILENIFVLL) traverse the membrane as a helical segment. Topologically, residues 69–82 (TIWKTKKFHRPMYY) are cytoplasmic. A helical membrane pass occupies residues 83–104 (FIGNLALSDLLAGVAYTANLLL). At 105-116 (SGATTYKLTPAQ) the chain is on the extracellular side. The chain crosses the membrane as a helical span at residues 117-138 (WFLREGSMFVALSASVFSLLAI). 120–121 (RE) is a sphing-4-enine 1-phosphate binding site. The Cytoplasmic segment spans residues 139–160 (AIERYITMLKMKLHNGSNSSRS). The helical transmembrane segment at 161-182 (FLLISACWVISLILGGLPIMGW) threads the bilayer. The Extracellular segment spans residues 183-196 (NCISSLSSCSTVLP). Cys-184 and Cys-191 form a disulfide bridge. The chain crosses the membrane as a helical span at residues 197–224 (LYHKHYILFCTTVFTLLLLSIVILYCRI). Residues 225 to 257 (YSLVRTRSRRLTFRKNISKASRSSEKSLALLKT) lie on the Cytoplasmic side of the membrane. Thr-236 carries the post-translational modification Phosphothreonine. A helical membrane pass occupies residues 258–278 (VIIVLSVFIACWAPLFILLLL). 265-269 (FIACW) serves as a coordination point for sphing-4-enine 1-phosphate. Residues 279-289 (DVGCKAKTCDI) lie on the Extracellular side of the membrane. Cys-282 and Cys-287 form a disulfide bridge. A helical transmembrane segment spans residues 290-310 (LYKAEYFLVLAVLNSGTNPII). The Cytoplasmic portion of the chain corresponds to 311–382 (YTLTNKEMRR…MSSGNVNSSS (72 aa)). A lipid anchor (S-palmitoyl cysteine) is attached at Cys-328. Residues 348–382 (MEFSRSKSDNSSHPQKDDGDNPETIMSSGNVNSSS) are disordered. 2 positions are modified to phosphoserine: Ser-351 and Ser-353. Residues 351 to 366 (SRSKSDNSSHPQKDDG) show a composition bias toward basic and acidic residues. The segment covering 371–382 (TIMSSGNVNSSS) has biased composition (polar residues).

This sequence belongs to the G-protein coupled receptor 1 family. In terms of assembly, interacts with GNAI1 and GNAI3. Interacts with CD69; this interaction promotes S1PR1 degradation. Post-translationally, palmitoylated by ZDHHC5. Palmitoylation is required for targeting to plasma membrane, enabling G(i) coupling. As to expression, expressed in a wide variety of tissues with highest levels in brain, heart and spleen. Lower levels found in kidney, liver, lung, muscle, placenta, thymus, and uterus. Very low levels in intestine, stomach and testis. According to PubMed:9931453, expressed modestly in apparent endothelial cells surrounding some blood vessels (e.g. aortic trunk).

The protein localises to the cell membrane. Its subcellular location is the endosome. It is found in the membrane raft. G-protein coupled receptor for the bioactive lysosphingolipid sphingosine 1-phosphate (S1P) that seems to be coupled to the G(i) subclass of heteromeric G proteins. Signaling leads to the activation of RAC1, SRC, PTK2/FAK1 and MAP kinases. Plays an important role in cell migration, probably via its role in the reorganization of the actin cytoskeleton and the formation of lamellipodia in response to stimuli that increase the activity of the sphingosine kinase SPHK1. Required for normal chemotaxis toward sphingosine 1-phosphate. Required for normal embryonic heart development and normal cardiac morphogenesis. Plays an important role in the regulation of sprouting angiogenesis and vascular maturation. Inhibits sprouting angiogenesis to prevent excessive sprouting during blood vessel development. Required for normal egress of mature T-cells from the thymus into the blood stream and into peripheral lymphoid organs. Plays a role in the migration of osteoclast precursor cells, the regulation of bone mineralization and bone homeostasis. Plays a role in responses to oxidized 1-palmitoyl-2-arachidonoyl-sn-glycero-3-phosphocholine by pulmonary endothelial cells and in the protection against ventilator-induced lung injury. The polypeptide is Sphingosine 1-phosphate receptor 1 (Mus musculus (Mouse)).